A 170-amino-acid polypeptide reads, in one-letter code: Large ribosomal subunit protein uL11 (170 aa).

This sequence belongs to the universal ribosomal protein uL11 family. Part of the ribosomal stalk of the 50S ribosomal subunit. Interacts with L10 and the large rRNA to form the base of the stalk. L10 forms an elongated spine to which L12 dimers bind in a sequential fashion forming a multimeric L10(L12)X complex.

Functionally, forms part of the ribosomal stalk which helps the ribosome interact with GTP-bound translation factors. The chain is Large ribosomal subunit protein uL11 from Saccharolobus islandicus (strain M.14.25 / Kamchatka #1) (Sulfolobus islandicus).